A 123-amino-acid chain; its full sequence is Cliotide T12 (123 aa).

Positions 1-28 are cleaved as a signal peptide; sequence MASLRIAPLALFFFLAASVMFTVEKTEA. The cyclopeptide (Gly-Asp) cross-link spans 29–58; it reads GIPCGESCVFIPCITGAIGCSCKSKVCYRD. Disulfide bonds link Cys32–Cys48, Cys36–Cys50, and Cys41–Cys55. Residues 59–123 constitute a propeptide, removed in mature form; that stretch reads HVIAAEAKTM…KDHLKMSVPN (65 aa).

Post-translationally, contains 3 disulfide bonds. In terms of processing, this is a cyclic peptide.

Its function is as follows. Probably participates in a plant defense mechanism. The protein is Cliotide T12 of Clitoria ternatea (Butterfly pea).